A 444-amino-acid chain; its full sequence is Tol-Pal system protein TolB (444 aa).

Residues 1 to 19 (MRNIIYFILSLLFSVTSYA) form the signal peptide.

The protein belongs to the TolB family. In terms of assembly, the Tol-Pal system is composed of five core proteins: the inner membrane proteins TolA, TolQ and TolR, the periplasmic protein TolB and the outer membrane protein Pal. They form a network linking the inner and outer membranes and the peptidoglycan layer.

Its subcellular location is the periplasm. Its function is as follows. Part of the Tol-Pal system, which plays a role in outer membrane invagination during cell division and is important for maintaining outer membrane integrity. This is Tol-Pal system protein TolB from Rickettsia africae (strain ESF-5).